The sequence spans 396 residues: Enoyl-[acyl-carrier-protein] reductase [NADH] (396 aa).

Residues 47–52 (GASTGF), 73–74 (FE), 110–111 (DA), and 138–139 (LA) contribute to the NAD(+) site. Y224 contacts substrate. Y234 acts as the Proton donor in catalysis. NAD(+) is bound by residues K243 and 272–274 (LVT).

This sequence belongs to the TER reductase family. As to quaternary structure, monomer.

The catalysed reaction is a 2,3-saturated acyl-[ACP] + NAD(+) = a (2E)-enoyl-[ACP] + NADH + H(+). The protein operates within lipid metabolism; fatty acid biosynthesis. In terms of biological role, involved in the final reduction of the elongation cycle of fatty acid synthesis (FAS II). Catalyzes the reduction of a carbon-carbon double bond in an enoyl moiety that is covalently linked to an acyl carrier protein (ACP). In Flavobacterium johnsoniae (strain ATCC 17061 / DSM 2064 / JCM 8514 / BCRC 14874 / CCUG 350202 / NBRC 14942 / NCIMB 11054 / UW101) (Cytophaga johnsonae), this protein is Enoyl-[acyl-carrier-protein] reductase [NADH].